A 694-amino-acid polypeptide reads, in one-letter code: PTS system fructose-specific EIIABC component (694 aa).

A PTS EIIA type-2 domain is found at 4 to 149 (PLLSAELFFN…NGLINLIDSF (146 aa)). Residue histidine 68 is the Tele-phosphohistidine intermediate; for EIIA activity of the active site. Histidine 68 is subject to Phosphohistidine; by HPr. The PTS EIIB type-2 domain maps to 179 to 275 (FVAVTACPTG…PQTVYDQVVK (97 aa)). The Phosphocysteine intermediate; for EIIB activity role is filled by cysteine 185. A Phosphocysteine; by EIIA modification is found at cysteine 185. The PTS EIIC type-2 domain maps to 310 to 687 (IYRAILSGVS…NLLVVRKKTK (378 aa)). 10 consecutive transmembrane segments (helical) span residues 318 to 338 (VSYM…AFLI), 364 to 384 (GGLS…FALV), 390 to 410 (LPGF…IDIV), 422 to 442 (VSSG…LIIV), 461 to 481 (ILFI…VINI), 502 to 522 (LAPL…GGPV), 542 to 562 (VAMA…AIAA), 576 to 596 (AAYA…IPFV), 602 to 622 (IMLA…GAFA), and 655 to 675 (GVGL…GIII).

The protein resides in the cell membrane. The enzyme catalyses D-fructose(out) + N(pros)-phospho-L-histidyl-[protein] = D-fructose 1-phosphate(in) + L-histidyl-[protein]. In terms of biological role, the phosphoenolpyruvate-dependent sugar phosphotransferase system (sugar PTS), a major carbohydrate active transport system, catalyzes the phosphorylation of incoming sugar substrates concomitantly with their translocation across the cell membrane. This system is involved in fructose transport. In Mycoplasma pneumoniae (strain ATCC 29342 / M129 / Subtype 1) (Mycoplasmoides pneumoniae), this protein is PTS system fructose-specific EIIABC component.